Reading from the N-terminus, the 336-residue chain is Phospholipase A1 (336 aa).

Residues 1-27 (MEENMNLKYLLLFVYFVQVLNCCYGHG) form the signal peptide. A propeptide spanning residues 28–36 (DPLSYELDR) is cleaved from the precursor. An intrachain disulfide couples Cys-40 to Cys-123. Ser-173 acts as the Nucleophile in catalysis. Catalysis depends on Asp-201, which acts as the Charge relay system. Intrachain disulfides connect Cys-212-Cys-217 and Cys-255-Cys-263. Residue His-265 is the Charge relay system of the active site. Intrachain disulfides connect Cys-280–Cys-304, Cys-281–Cys-329, and Cys-297–Cys-302.

It belongs to the AB hydrolase superfamily. Lipase family. In terms of tissue distribution, expressed by the venom gland.

Its subcellular location is the secreted. The catalysed reaction is a 1,2-diacyl-sn-glycero-3-phosphocholine + H2O = a 2-acyl-sn-glycero-3-phosphocholine + a fatty acid + H(+). Its function is as follows. Catalyzes the hydrolysis of phosphatidylcholine with phospholipase A1 activity. Induces hemolytic activity. Acts as an allergen. The polypeptide is Phospholipase A1 (Vespula vulgaris (Yellow jacket)).